Here is an 87-residue protein sequence, read N- to C-terminus: ParB-like nuclease domain-containing protein YnaK (87 aa).

This Escherichia coli (strain K12) protein is ParB-like nuclease domain-containing protein YnaK (ynaK).